We begin with the raw amino-acid sequence, 326 residues long: Pectate lyase plyB (326 aa).

The signal sequence occupies residues 1 to 15 (MRFTPLFLLAAVAIA). The Ca(2+) site is built by Asp-133, Asp-162, and Asp-166. Arg-219 is a catalytic residue.

Belongs to the polysaccharide lyase 1 family. It depends on Ca(2+) as a cofactor.

It localises to the secreted. The catalysed reaction is Eliminative cleavage of (1-&gt;4)-alpha-D-galacturonan to give oligosaccharides with 4-deoxy-alpha-D-galact-4-enuronosyl groups at their non-reducing ends.. The protein operates within glycan metabolism; pectin degradation; 2-dehydro-3-deoxy-D-gluconate from pectin: step 2/5. Pectinolytic enzyme consist of four classes of enzymes: pectin lyase, polygalacturonase, pectin methylesterase and rhamnogalacturonase. Among pectinolytic enzymes, pectin lyase is the most important in depolymerization of pectin, since it cleaves internal glycosidic bonds of highly methylated pectins. The sequence is that of Pectate lyase plyB (plyB) from Emericella nidulans (strain FGSC A4 / ATCC 38163 / CBS 112.46 / NRRL 194 / M139) (Aspergillus nidulans).